Here is a 645-residue protein sequence, read N- to C-terminus: Putative palmitoyltransferase ZDHHC13 (645 aa).

The segment at 1–73 (MDWSEGDGSH…KSSHPEDSSS (73 aa)) is disordered. Topologically, residues 1 to 314 (MDWSEGDGSH…ACLKLLNRYK (314 aa)) are cytoplasmic. Over residues 7-20 (DGSHSHGHMGDSCH) the composition is skewed to basic and acidic residues. Over residues 23–33 (GGGHSHGHGHS) the composition is skewed to basic residues. Gly residues predominate over residues 34–43 (HGGSGFGGFM). ANK repeat units lie at residues 104-133 (ENVT…VIDQ), 138-167 (LNST…DPSL), 171-200 (EGYR…EVDL), 204-234 (NGQT…SVNA), and 239-268 (NRNS…SVDM). A helical membrane pass occupies residues 315–335 (VCLQSVFSVVVVGAFGAILDM). Position 336 (R336) is a topological domain, lumenal. The helical transmembrane segment at 337-357 (TESWLLKGILLACIMAVINLA) threads the bilayer. The Cytoplasmic portion of the chain corresponds to 358–369 (SRQLATVAVRSL). Residues 370–390 (IPSTGLIASVFWMVVTWVLWF) form a helical membrane-spanning segment. Over 391–394 (LPDE) the chain is Lumenal. A helical transmembrane segment spans residues 395–415 (PSAAVQMLFTVNITAVLYYYI). Over 416-492 (RSCRTDPGHV…NGCIGARNHP (77 aa)) the chain is Cytoplasmic. Residues 449 to 499 (IFCTSCMMRKPMRANHCFSCNACVAKQDHHSIWINGCIGARNHPFFVLFLV) form the DHHC domain. The helical transmembrane segment at 493–513 (FFVLFLVALNFLCIWMFYGSI) threads the bilayer. At 514-542 (TYWSRHCPLHYSEEGIWGALTALMGCSPW) the chain is on the lumenal side. Residues 543-563 (LLYVFCFVFFHTTWASILLVL) form a helical membrane-spanning segment. At 564–645 (QLYQIAFLGL…RDMFSSPDAV (82 aa)) the chain is on the cytoplasmic side.

The protein belongs to the DHHC palmitoyltransferase family. AKR/ZDHHC17 subfamily.

Its subcellular location is the golgi apparatus membrane. The protein localises to the cytoplasmic vesicle membrane. Putative palmitoyltransferase that could catalyze the addition of palmitate onto various protein substrates. The protein is Putative palmitoyltransferase ZDHHC13 of Danio rerio (Zebrafish).